Reading from the N-terminus, the 348-residue chain is Erythronate-4-phosphate dehydrogenase (348 aa).

Substrate contacts are provided by T46 and T67. D147 provides a ligand contact to NAD(+). R209 is a catalytic residue. D233 is a binding site for NAD(+). E238 is a catalytic residue. The active-site Proton donor is H255. G258 lines the NAD(+) pocket. Y259 provides a ligand contact to substrate.

This sequence belongs to the D-isomer specific 2-hydroxyacid dehydrogenase family. PdxB subfamily. As to quaternary structure, homodimer.

The protein localises to the cytoplasm. It carries out the reaction 4-phospho-D-erythronate + NAD(+) = (R)-3-hydroxy-2-oxo-4-phosphooxybutanoate + NADH + H(+). It functions in the pathway cofactor biosynthesis; pyridoxine 5'-phosphate biosynthesis; pyridoxine 5'-phosphate from D-erythrose 4-phosphate: step 2/5. In terms of biological role, catalyzes the oxidation of erythronate-4-phosphate to 3-hydroxy-2-oxo-4-phosphonooxybutanoate. The polypeptide is Erythronate-4-phosphate dehydrogenase (Bacteroides thetaiotaomicron (strain ATCC 29148 / DSM 2079 / JCM 5827 / CCUG 10774 / NCTC 10582 / VPI-5482 / E50)).